Reading from the N-terminus, the 503-residue chain is CDK5 regulatory subunit-associated protein 3 (503 aa).

3 consecutive short sequence motifs (shuffled ATG8-binding motif) follow at residues 266–269 (IDWG), 288–291 (IDWG), and 306–309 (IDWG). The segment at 268–503 (WGDFGVEAVS…RPVNLMGTSL (236 aa)) is required for interaction with UFL1 and mediates interaction with CHEK1. The interval 352–367 (DELMELEIFLSQRAVE) is RPL10a-binding domain (RBD). Residue Lys-447 forms a Glycyl lysine isopeptide (Lys-Gly) (interchain with G-Cter in SUMO2) linkage.

Belongs to the CDK5RAP3 family. As to quaternary structure, substrate adapter component of the UFM1 ribosome E3 ligase (UREL) complex, composed of UFL1, DDRGK1 and CDK5RAP3. Interaction with UFL1 anchors CDK5RAP3 in the cytoplasm, preventing its translocation to the nucleus which allows expression of the CCND1 cyclin and progression of cells through the G1/S transition. Interacts with ATG8 family proteins MAP1LC3A, MAP1LC3B, GABARAP, GABARAPL1 and GABARAPL2. Interacts with CDK5R1; competes with CDK5RAP1 and CDK5RAP2. Interacts with RELA. Interacts with CHEK1; may negatively regulate CHEK1 and thereby stimulate entry into mitosis. Interacts with CDKN2A/ARF and MDM2; forms a ternary complex involved in regulation of p53/TP53. Interacts with MAPK14. Interacts with CCNB1. Interacts with TUBG1; may regulate CDK5RAP3 in mitotic G2/M transition checkpoint. In terms of processing, may be phosphorylated by CDK5. Ubiquitinated. Probably triggers proteasomal degradation and is negatively regulated by UFL1. Post-translationally, may be ufmylated. In terms of processing, cleaved by caspases early during apoptosis, the resulting peptides may play a role in rupture of the nuclear envelope. As to expression, widely expressed with higher expression in secretory tissues.

The protein resides in the endoplasmic reticulum membrane. It localises to the cytoplasm. It is found in the nucleus. Its subcellular location is the cytoskeleton. The protein localises to the microtubule organizing center. The protein resides in the centrosome. In terms of biological role, substrate adapter of E3 ligase complexes mediating ufmylation, the covalent attachment of the ubiquitin-like modifier UFM1 to substrate proteins, and which is involved in various processes, such as ribosome recycling and reticulophagy (also called ER-phagy). As part of the UREL complex, plays a key role in ribosome recycling by promoting mono-ufmylation of RPL26/uL24 subunit of the 60S ribosome. Ufmylation of RPL26/uL24 occurs on free 60S ribosomes following ribosome dissociation: it weakens the junction between post-termination 60S subunits and SEC61 translocons, promoting release and recycling of the large ribosomal subunit from the endoplasmic reticulum membrane. Ufmylation of RPL26/uL24 and subsequent 60S ribosome recycling either take place after normal termination of translation or after ribosome stalling during cotranslational translocation at the endoplasmic reticulum. Within the UREL complex, CDK5RAP3 acts as a substrate adapter that constrains UFL1 ligase activity to mono-ufmylate RPL26/uL24 at 'Lys-134'. The UREL complex is also involved in reticulophagy in response to endoplasmic reticulum stress by promoting ufmylation of proteins such as CYB5R3, thereby promoting lysosomal degradation of ufmylated proteins. Also acts as a regulator of transcription: negatively regulates NF-kappa-B-mediated gene transcription through the control of RELA phosphorylation. Also regulates mitotic G2/M transition checkpoint and mitotic G2 DNA damage checkpoint. Through its interaction with CDKN2A/ARF and MDM2 may induce MDM2-dependent p53/TP53 ubiquitination, stabilization and activation in the nucleus, thereby promoting G1 cell cycle arrest and inhibition of cell proliferation. May also play a role in the rupture of the nuclear envelope during apoptosis. May regulate MAPK14 activity by regulating its dephosphorylation by PPM1D/WIP1. Required for liver development. The sequence is that of CDK5 regulatory subunit-associated protein 3 from Mus musculus (Mouse).